We begin with the raw amino-acid sequence, 22 residues long: Motilin (22 aa).

Polar residues predominate over residues 1-11 (FVPFFTQSDIQ). The interval 1–22 (FVPFFTQSDIQKMQEKERNKGQ) is disordered. Basic and acidic residues predominate over residues 12–22 (KMQEKERNKGQ).

The protein belongs to the motilin family.

It is found in the secreted. Plays an important role in the regulation of interdigestive gastrointestinal motility and indirectly causes rhythmic contraction of duodenal and colonic smooth muscle. In Gallus gallus (Chicken), this protein is Motilin (MLN).